The chain runs to 295 residues: Aspartate carbamoyltransferase catalytic subunit (295 aa).

2 residues coordinate carbamoyl phosphate: R54 and T55. K82 lines the L-aspartate pocket. Residues R104, H132, and Q135 each coordinate carbamoyl phosphate. Positions 165 and 218 each coordinate L-aspartate. Residues G257 and P258 each coordinate carbamoyl phosphate.

The protein belongs to the aspartate/ornithine carbamoyltransferase superfamily. ATCase family. In terms of assembly, heterododecamer (2C3:3R2) of six catalytic PyrB chains organized as two trimers (C3), and six regulatory PyrI chains organized as three dimers (R2).

The enzyme catalyses carbamoyl phosphate + L-aspartate = N-carbamoyl-L-aspartate + phosphate + H(+). It functions in the pathway pyrimidine metabolism; UMP biosynthesis via de novo pathway; (S)-dihydroorotate from bicarbonate: step 2/3. Functionally, catalyzes the condensation of carbamoyl phosphate and aspartate to form carbamoyl aspartate and inorganic phosphate, the committed step in the de novo pyrimidine nucleotide biosynthesis pathway. The protein is Aspartate carbamoyltransferase catalytic subunit of Wolbachia pipientis subsp. Culex pipiens (strain wPip).